The following is a 494-amino-acid chain: Cytochrome P450 2A8 (494 aa).

Residue Cys439 coordinates heme.

The protein belongs to the cytochrome P450 family. Requires heme as cofactor. In terms of tissue distribution, liver.

It localises to the endoplasmic reticulum membrane. Its subcellular location is the microsome membrane. The catalysed reaction is an organic molecule + reduced [NADPH--hemoprotein reductase] + O2 = an alcohol + oxidized [NADPH--hemoprotein reductase] + H2O + H(+). Highly active in 7-ethoxycoumarin O-deethylation, and benzphetamine N-demethylation; moderately active in testosterone 7-alpha-hydroxylation, ethylmorphine N-demethylation, p-nitroanisole O-demethylation; and only slightly active in benzopyrene 3-hydroxylation, 7-ethoxyresorufin O-deethylation, testosterone 2-alpha-hydroxylation and testosterone 17-oxidation. Competent in the metabolic activation of aflatoxin B1. This is Cytochrome P450 2A8 (CYP2A8) from Mesocricetus auratus (Golden hamster).